The following is a 58-amino-acid chain: Small ribosomal subunit protein eS27 (58 aa).

The Zn(2+) site is built by Cys-10, Cys-13, Cys-29, and Cys-32. A C4-type zinc finger spans residues 10–32 (CPDCEHEQVIFDHPSTIVKCIIC).

The protein belongs to the eukaryotic ribosomal protein eS27 family. As to quaternary structure, part of the 30S ribosomal subunit. Requires Zn(2+) as cofactor.

The polypeptide is Small ribosomal subunit protein eS27 (Archaeoglobus fulgidus (strain ATCC 49558 / DSM 4304 / JCM 9628 / NBRC 100126 / VC-16)).